The following is a 210-amino-acid chain: Ovomucoid (210 aa).

Residues 1–24 form the signal peptide; the sequence is MAMAGVFVLFSFVLCGFLPDAAFG. Kazal-like domains lie at 25 to 88, 89 to 153, and 156 to 210; these read AEVD…ECKE, TVPM…GCRK, and AAVS…FGKC. Cystine bridges form between cysteine 29–cysteine 68, cysteine 46–cysteine 65, and cysteine 54–cysteine 86. An N-linked (GlcNAc...) asparagine glycan is attached at asparagine 34. N-linked (GlcNAc...) asparagine glycosylation is found at asparagine 77, asparagine 93, and asparagine 99. 6 disulfide bridges follow: cysteine 94–cysteine 133, cysteine 111–cysteine 130, cysteine 119–cysteine 151, cysteine 162–cysteine 192, cysteine 170–cysteine 189, and cysteine 178–cysteine 210. Asparagine 199 carries N-linked (GlcNAc...) asparagine; partial glycosylation.

Its subcellular location is the secreted. Functionally, serine protease inhibitor. Inhibits trypsin. This is Ovomucoid from Gallus gallus (Chicken).